A 365-amino-acid chain; its full sequence is Pre-small/secreted glycoprotein (365 aa).

A signal peptide spans 1-32; the sequence is MGASGILQLPRERFRKTSFFVWVIILFHKVFS. Asn40 carries an N-linked (GlcNAc...) asparagine; by host glycan. Cystine bridges form between Cys108/Cys135 and Cys121/Cys147. 4 N-linked (GlcNAc...) asparagine; by host glycosylation sites follow: Asn204, Asn228, Asn257, and Asn268.

This sequence belongs to the filoviruses glycoprotein family. As to quaternary structure, homodimer; disulfide-linked. The homodimers are linked by two disulfide bonds in a parallel orientation. Monomer. This precursor is processed into mature sGP and delta-peptide by host furin or furin-like proteases. The cleavage site corresponds to the furin optimal cleavage sequence [KR]-X-[KR]-R. Post-translationally, N-glycosylated. In terms of processing, O-glycosylated.

It localises to the secreted. In terms of biological role, seems to possess an anti-inflammatory activity as it can reverse the barrier-decreasing effects of TNF alpha. Might therefore contribute to the lack of inflammatory reaction seen during infection in spite the of extensive necrosis and massive virus production. Does not seem to be involved in activation of primary macrophages. Does not seem to interact specifically with neutrophils. Viroporin that permeabilizes mammalian cell plasma membranes. It acts by altering permeation of ionic compounds and small molecules. This activity may lead to viral enterotoxic activity. This Epomops franqueti (Franquet's epauletted fruit bat) protein is Pre-small/secreted glycoprotein (GP).